Reading from the N-terminus, the 393-residue chain is Probable acetyl-CoA acetyltransferase (393 aa).

Cys-88 serves as the catalytic Acyl-thioester intermediate. Residues His-348 and Cys-378 each act as proton acceptor in the active site.

Belongs to the thiolase-like superfamily. Thiolase family.

It is found in the cytoplasm. It carries out the reaction 2 acetyl-CoA = acetoacetyl-CoA + CoA. This chain is Probable acetyl-CoA acetyltransferase (yqeF), found in Escherichia coli (strain K12).